Consider the following 328-residue polypeptide: GMP reductase (328 aa).

Cysteine 176 serves as the catalytic Thioimidate intermediate. Residue 205-228 (IIADGGIRTHGDIAKSIRFGASMI) participates in NADP(+) binding.

The protein belongs to the IMPDH/GMPR family. GuaC type 2 subfamily.

The enzyme catalyses IMP + NH4(+) + NADP(+) = GMP + NADPH + 2 H(+). Functionally, catalyzes the irreversible NADPH-dependent deamination of GMP to IMP. It functions in the conversion of nucleobase, nucleoside and nucleotide derivatives of G to A nucleotides, and in maintaining the intracellular balance of A and G nucleotides. This chain is GMP reductase, found in Streptococcus pneumoniae (strain JJA).